A 466-amino-acid chain; its full sequence is 3-isopropylmalate dehydratase large subunit (466 aa).

Cysteine 347, cysteine 407, and cysteine 410 together coordinate [4Fe-4S] cluster.

This sequence belongs to the aconitase/IPM isomerase family. LeuC type 1 subfamily. Heterodimer of LeuC and LeuD. Requires [4Fe-4S] cluster as cofactor.

It catalyses the reaction (2R,3S)-3-isopropylmalate = (2S)-2-isopropylmalate. Its pathway is amino-acid biosynthesis; L-leucine biosynthesis; L-leucine from 3-methyl-2-oxobutanoate: step 2/4. Functionally, catalyzes the isomerization between 2-isopropylmalate and 3-isopropylmalate, via the formation of 2-isopropylmaleate. The chain is 3-isopropylmalate dehydratase large subunit from Klebsiella pneumoniae subsp. pneumoniae (strain ATCC 700721 / MGH 78578).